The following is a 155-amino-acid chain: Large ribosomal subunit protein eL24 (155 aa).

Residues proline 98–lysine 129 are compositionally biased toward basic and acidic residues. Residues proline 98–arginine 155 are disordered.

The protein belongs to the eukaryotic ribosomal protein eL24 family.

The protein is Large ribosomal subunit protein eL24 (RPL24) of Candida glabrata (strain ATCC 2001 / BCRC 20586 / JCM 3761 / NBRC 0622 / NRRL Y-65 / CBS 138) (Yeast).